The following is a 119-amino-acid chain: Large ribosomal subunit protein uL18 (119 aa).

Belongs to the universal ribosomal protein uL18 family. In terms of assembly, part of the 50S ribosomal subunit; part of the 5S rRNA/L5/L18/L25 subcomplex. Contacts the 5S and 23S rRNAs.

In terms of biological role, this is one of the proteins that bind and probably mediate the attachment of the 5S RNA into the large ribosomal subunit, where it forms part of the central protuberance. This Staphylococcus aureus (strain Mu3 / ATCC 700698) protein is Large ribosomal subunit protein uL18.